The following is a 155-amino-acid chain: Ribosomal RNA large subunit methyltransferase H (155 aa).

Residues leucine 72, glycine 103, and 122 to 127 each bind S-adenosyl-L-methionine; that span reads LSALTL.

The protein belongs to the RNA methyltransferase RlmH family. In terms of assembly, homodimer.

Its subcellular location is the cytoplasm. It carries out the reaction pseudouridine(1915) in 23S rRNA + S-adenosyl-L-methionine = N(3)-methylpseudouridine(1915) in 23S rRNA + S-adenosyl-L-homocysteine + H(+). Functionally, specifically methylates the pseudouridine at position 1915 (m3Psi1915) in 23S rRNA. This is Ribosomal RNA large subunit methyltransferase H from Escherichia fergusonii (strain ATCC 35469 / DSM 13698 / CCUG 18766 / IAM 14443 / JCM 21226 / LMG 7866 / NBRC 102419 / NCTC 12128 / CDC 0568-73).